Reading from the N-terminus, the 383-residue chain is DNA-directed RNA polymerase subunit alpha (383 aa).

Residues 1 to 240 are alpha N-terminal domain (alpha-NTD); that stretch reads MEKKTGLIQF…NLFHQISPPL (240 aa). Residues 306–383 form an alpha C-terminal domain (alpha-CTD) region; sequence IDKQMNDSVN…RFNMELLPTK (78 aa).

Belongs to the RNA polymerase alpha chain family. As to quaternary structure, in plastids the minimal PEP RNA polymerase catalytic core is composed of four subunits: alpha, beta, beta', and beta''. When a (nuclear-encoded) sigma factor is associated with the core the holoenzyme is formed, which can initiate transcription.

It is found in the plastid. Its subcellular location is the chloroplast. It catalyses the reaction RNA(n) + a ribonucleoside 5'-triphosphate = RNA(n+1) + diphosphate. Functionally, DNA-dependent RNA polymerase catalyzes the transcription of DNA into RNA using the four ribonucleoside triphosphates as substrates. The polypeptide is DNA-directed RNA polymerase subunit alpha (Staurastrum punctulatum (Green alga)).